The primary structure comprises 292 residues: L-serine dehydratase, alpha chain (292 aa).

The protein belongs to the iron-sulfur dependent L-serine dehydratase family. In terms of assembly, heterooctamer of four alpha chains and four beta chains. The cofactor is [4Fe-4S] cluster.

It carries out the reaction L-serine = pyruvate + NH4(+). It participates in carbohydrate biosynthesis; gluconeogenesis. The chain is L-serine dehydratase, alpha chain (sdhA) from Peptoniphilus asaccharolyticus (Peptostreptococcus asaccharolyticus).